Reading from the N-terminus, the 354-residue chain is 3'-hydroxy-N-methyl-(S)-coclaurine 4'-O-methyltransferase 1 (354 aa).

Asp-223 provides a ligand contact to S-adenosyl-L-methionine. The Proton acceptor role is filled by His-261.

This sequence belongs to the class I-like SAM-binding methyltransferase superfamily. Cation-independent O-methyltransferase family. COMT subfamily. Expressed in roots, stems, leaves and flowers. Restricted to sieve elements of the phloem adjacent or proximal to laticifers.

The catalysed reaction is (S)-3'-hydroxy-N-methylcoclaurine + S-adenosyl-L-methionine = (S)-reticuline + S-adenosyl-L-homocysteine + H(+). The protein operates within alkaloid biosynthesis; (S)-reticuline biosynthesis; (S)-reticuline from (S)-norcoclaurine: step 4/4. Functionally, involved in the biosynthesis of benzylisoquinoline alkaloids. Catalyzes the transfer of the methyl group to the 4'-hydroxyl group of 3'-hydroxy-N-methylcoclaurine to form reticuline. Also involved in the papaverine biosynthesis. This Papaver somniferum (Opium poppy) protein is 3'-hydroxy-N-methyl-(S)-coclaurine 4'-O-methyltransferase 1.